The chain runs to 181 residues: Alkyl hydroperoxide reductase AhpD (181 aa).

The active-site Proton donor is the Cys-131. Cys-131 and Cys-134 are oxidised to a cystine. The active-site Cysteine sulfenic acid (-SOH) intermediate is the Cys-134.

Belongs to the AhpD family.

It carries out the reaction N(6)-[(R)-dihydrolipoyl]-L-lysyl-[lipoyl-carrier protein] + a hydroperoxide = N(6)-[(R)-lipoyl]-L-lysyl-[lipoyl-carrier protein] + an alcohol + H2O. Functionally, antioxidant protein with alkyl hydroperoxidase activity. Required for the reduction of the AhpC active site cysteine residues and for the regeneration of the AhpC enzyme activity. The chain is Alkyl hydroperoxide reductase AhpD from Bradyrhizobium sp. (strain ORS 278).